Reading from the N-terminus, the 511-residue chain is Bifunctional purine biosynthesis protein PurH (511 aa).

Residues M1–V145 enclose the MGS-like domain.

It belongs to the PurH family.

The catalysed reaction is (6R)-10-formyltetrahydrofolate + 5-amino-1-(5-phospho-beta-D-ribosyl)imidazole-4-carboxamide = 5-formamido-1-(5-phospho-D-ribosyl)imidazole-4-carboxamide + (6S)-5,6,7,8-tetrahydrofolate. It catalyses the reaction IMP + H2O = 5-formamido-1-(5-phospho-D-ribosyl)imidazole-4-carboxamide. Its pathway is purine metabolism; IMP biosynthesis via de novo pathway; 5-formamido-1-(5-phospho-D-ribosyl)imidazole-4-carboxamide from 5-amino-1-(5-phospho-D-ribosyl)imidazole-4-carboxamide (10-formyl THF route): step 1/1. It participates in purine metabolism; IMP biosynthesis via de novo pathway; IMP from 5-formamido-1-(5-phospho-D-ribosyl)imidazole-4-carboxamide: step 1/1. The protein is Bifunctional purine biosynthesis protein PurH of Halalkalibacterium halodurans (strain ATCC BAA-125 / DSM 18197 / FERM 7344 / JCM 9153 / C-125) (Bacillus halodurans).